A 151-amino-acid polypeptide reads, in one-letter code: Probable transcriptional regulator syrB3 (151 aa).

The interval 1–65 is disordered; it reads MVDESNAGPV…QERSEKLRLI (65 aa). Residues 7–23 are compositionally biased toward low complexity; the sequence is AGPVAPAVVADAEVKAP. Positions 52-65 are enriched in basic and acidic residues; sequence GYSEQERSEKLRLI.

The protein belongs to the SyrB family.

The protein is Probable transcriptional regulator syrB3 (syrB3) of Rhizobium meliloti (strain 1021) (Ensifer meliloti).